The primary structure comprises 122 residues: Sperm-egg fusion protein LLCFC1 (122 aa).

The first 28 residues, 1 to 28, serve as a signal peptide directing secretion; the sequence is MPPLAPQLCRAVFLVPILLLLQVKPLNG. Residues 27 to 51 are disordered; it reads NGSPGPKDGSQTEKTPSADQNQEQF. A compositionally biased stretch (polar residues) spans 38–49; it reads TEKTPSADQNQE.

The protein resides in the secreted. Its function is as follows. Sperm protein required for fusion of sperm with the egg membrane during fertilization. The polypeptide is Sperm-egg fusion protein LLCFC1 (Homo sapiens (Human)).